A 428-amino-acid polypeptide reads, in one-letter code: Maltoporin 1 (428 aa).

An N-terminal signal peptide occupies residues Met-1–Ala-25.

The protein belongs to the porin LamB (TC 1.B.3) family. As to quaternary structure, homotrimer formed of three 18-stranded antiparallel beta-barrels, containing three independent channels.

The protein localises to the cell outer membrane. The enzyme catalyses beta-maltose(in) = beta-maltose(out). Functionally, involved in the transport of maltose and maltodextrins. This Aeromonas salmonicida (strain A449) protein is Maltoporin 1.